Here is a 1378-residue protein sequence, read N- to C-terminus: Attractin-like protein 1 (1378 aa).

Residues 1-51 form the signal peptide; that stretch reads MEPGVRARSGAPQPASPVLWRARPAGGGGASSWLLLDGNSWLLCYGFLYLA. Residues 52–90 form the EGF-like 1 domain; it reads LYAQVSQSKPCERTGSCFSGRCVNSTCLCDPGWVGDQCQ. The Extracellular portion of the chain corresponds to 52-1229; it reads LYAQVSQSKP…FSQHNTIMDL (1178 aa). 3 disulfide bridges follow: C62–C78, C80–C89, and C92–C118. Residue N75 is glycosylated (N-linked (GlcNAc...) asparagine). One can recognise a CUB domain in the interval 92–208; it reads CQGRFKLTEP…TGFNIFYSIN (117 aa). N-linked (GlcNAc...) asparagine glycosylation is found at N173 and N197. The region spanning 206–244 is the EGF-like 2 domain; the sequence is SINSCPNNCSGHGKCTTSVSVASQVYCECDKYWKGEACD. 3 disulfide bridges follow: C210/C220, C214/C232, and C234/C243. Kelch repeat units follow at residues 315-364, 366-414, 426-474, 479-530, 532-590, and 591-637; these read FMWV…LYQE, IFMY…EGHS, VMIV…SVYD, SIYV…LING, MLIF…VING, and SMYI…WNKN. The N-linked (GlcNAc...) asparagine glycan is linked to N379. PSI domains are found at residues 613 to 656, 665 to 708, and 714 to 759; these read NCKA…AKCP, RCYR…TKCH, and ICNK…DACL. Residue N703 is glycosylated (N-linked (GlcNAc...) asparagine). One can recognise a C-type lectin domain in the interval 754 to 872; that stretch reads VGDACLRINS…TSMADGLVCE (119 aa). An intrachain disulfide couples C775 to C871. N-linked (GlcNAc...) asparagine glycans are attached at residues N777 and N897. PSI domains lie at 888-938 and 941-1011; these read PCSL…ATCS and NCSG…IQCP. Disulfide bonds link C1013–C1021, C1015–C1027, C1030–C1039, C1042–C1056, C1059–C1068, C1061–C1075, C1077–C1087, and C1090–C1105. 2 consecutive Laminin EGF-like domains span residues 1013 to 1058 and 1059 to 1107; these read CQCN…QCTA and CTCG…TCYY. A glycan (N-linked (GlcNAc...) asparagine) is linked at N1156. Residues 1230-1250 traverse the membrane as a helical segment; that stretch reads VQFFVTFFSCFLSLLLVAAVV. Residues 1251 to 1378 are Cytoplasmic-facing; that stretch reads WKIKQTCWAS…HLSTRQGTCV (128 aa). Residues 1287–1324 form an interaction with MC4R region; the sequence is VGAEQTDFLRGPLEGAPKPIAIEPCAGNRAAVLTVFLC. The interval 1351-1378 is disordered; that stretch reads QQKPSDNKDKTSGVRNRKHLSTRQGTCV.

As to quaternary structure, interacts with MC4R. As to expression, highly expressed in brain, heart, lung, kidney and liver. In the central nervous system, it is highly expressed in the dentate gyrus, CA1-3 regions of the hippocampus, and the ventral taenia tecta.

Its subcellular location is the cell membrane. In terms of biological role, may play a role in melanocortin signaling pathways that regulate energy homeostasis. This chain is Attractin-like protein 1 (Atrnl1), found in Mus musculus (Mouse).